We begin with the raw amino-acid sequence, 123 residues long: VQ motif-containing protein 29 (123 aa).

Residues 24–55 (TKNYLTSLHSTRKQPSKPLKRPAISSPLNPMH) are disordered. Residues 33-43 (STRKQPSKPLK) show a composition bias toward basic residues. The VQ signature appears at 66 to 75 (FKVLVQRLTG). Residues 77 to 94 (PEHETVQAKPLKTSDDAA) show a composition bias toward basic and acidic residues. Positions 77-123 (PEHETVQAKPLKTSDDAAKQSSSSFAFDPSSSWGDFSFQNPANISRW) are disordered. A compositionally biased stretch (low complexity) spans 97–108 (SSSSFAFDPSSS). A compositionally biased stretch (polar residues) spans 109–123 (WGDFSFQNPANISRW).

It localises to the nucleus. May function as negative regulator of flowering transition. The sequence is that of VQ motif-containing protein 29 from Arabidopsis thaliana (Mouse-ear cress).